A 331-amino-acid chain; its full sequence is 6-phosphogluconolactonase (331 aa).

Belongs to the cycloisomerase 2 family.

The enzyme catalyses 6-phospho-D-glucono-1,5-lactone + H2O = 6-phospho-D-gluconate + H(+). It functions in the pathway carbohydrate degradation; pentose phosphate pathway; D-ribulose 5-phosphate from D-glucose 6-phosphate (oxidative stage): step 2/3. Catalyzes the hydrolysis of 6-phosphogluconolactone to 6-phosphogluconate. The protein is 6-phosphogluconolactonase of Klebsiella pneumoniae (strain 342).